A 510-amino-acid polypeptide reads, in one-letter code: Inositol-3-phosphate synthase (510 aa).

The NAD(+) site is built by glycine 70, glycine 71, asparagine 72, asparagine 73, aspartate 143, isoleucine 180, glutamine 190, arginine 193, threonine 230, alanine 231, asparagine 232, threonine 233, glycine 281, serine 282, aspartate 306, serine 309, asparagine 340, asparagine 341, aspartate 342, lysine 355, glycine 393, aspartate 394, aspartate 422, and serine 423.

This sequence belongs to the myo-inositol 1-phosphate synthase family. NAD(+) serves as cofactor.

It is found in the cytoplasm. Its subcellular location is the cytosol. The protein localises to the nucleus. The catalysed reaction is D-glucose 6-phosphate = 1D-myo-inositol 3-phosphate. It participates in polyol metabolism; myo-inositol biosynthesis; myo-inositol from D-glucose 6-phosphate: step 1/2. In terms of biological role, key enzyme in myo-inositol biosynthesis pathway that catalyzes the conversion of glucose 6-phosphate to 1-myo-inositol 1-phosphate in a NAD-dependent manner. This Nicotiana tabacum (Common tobacco) protein is Inositol-3-phosphate synthase.